The chain runs to 459 residues: MGKEKTHINIVVIGHVDSGKSTTTGHLIYKCGGIDKRTIEKFEKEAQEMGKGSFKYAWVLDKLKAERERGITIDIALWKFETAKFYVTIIDAPGHRDFIKNMITGTSQADCAVLVVACGTGEFEAGISKNGQTREHALLAQTLGVKQMIVACNKMDSTEPPFSEKRFEEIITEVKSFIKKIGYNPATIPFVPISGFNGDNMLEPSANMSWYKGWSVERKEGNASGKTLLEALDCIIPPQRPTDRPLRLPLQDVYKIGGIGTVPVGRVETGVIKPGMVVTFAPQNVTTEVKSVEMHHESLPEAQPGDNVGFNEKNVSVKDIRRGSVCSDSKNDPAKESKSFTAQVIVMNHPGQIGAGYTPVLDCHTAHIACKFAELKEKVDRRTGKKVEDLPKFLKSGDAGIVELIPTKPLCVEAFTDYAPLGRFAVRDMRQTVAVGVIKGVTKDDGSSGKVTKSAQKKK.

Positions 5-242 (KTHINIVVIG…DCIIPPQRPT (238 aa)) constitute a tr-type G domain. The interval 14 to 21 (GHVDSGKS) is G1. Residues 70–74 (GITID) are G2. The tract at residues 91–94 (DAPG) is G3. The G4 stretch occupies residues 153–156 (NKMD). The interval 194–196 (SGF) is G5. 5-glutamyl glycerylphosphorylethanolamine occurs at positions 301 and 374.

Belongs to the TRAFAC class translation factor GTPase superfamily. Classic translation factor GTPase family. EF-Tu/EF-1A subfamily.

It localises to the cytoplasm. Functionally, this protein promotes the GTP-dependent binding of aminoacyl-tRNA to the A-site of ribosomes during protein biosynthesis. The protein is Elongation factor 1-alpha 4 (eft-4) of Oscheius tipulae.